A 157-amino-acid chain; its full sequence is Protein Smg homolog (157 aa).

Belongs to the Smg family.

The chain is Protein Smg homolog from Pseudoalteromonas translucida (strain TAC 125).